The chain runs to 335 residues: tRNA N6-adenosine threonylcarbamoyltransferase (335 aa).

The a divalent metal cation site is built by His109, His113, and Tyr130. Substrate contacts are provided by residues 130–134, Asp162, Gly177, Glu181, and Asn266; that span reads YVSGG. Residue Asp294 participates in a divalent metal cation binding.

This sequence belongs to the KAE1 / TsaD family. In terms of assembly, component of the EKC/KEOPS complex composed of at least tp53rk, tprkb, osgep and lage3; the whole complex dimerizes. The cofactor is a divalent metal cation.

Its subcellular location is the cytoplasm. It localises to the nucleus. The enzyme catalyses L-threonylcarbamoyladenylate + adenosine(37) in tRNA = N(6)-L-threonylcarbamoyladenosine(37) in tRNA + AMP + H(+). In terms of biological role, component of the EKC/KEOPS complex that is required for the formation of a threonylcarbamoyl group on adenosine at position 37 (t(6)A37) in tRNAs that read codons beginning with adenine. The complex is probably involved in the transfer of the threonylcarbamoyl moiety of threonylcarbamoyl-AMP (TC-AMP) to the N6 group of A37. Osgep likely plays a direct catalytic role in this reaction, but requires other protein(s) of the complex to fulfill this activity. This is tRNA N6-adenosine threonylcarbamoyltransferase from Xenopus laevis (African clawed frog).